A 70-amino-acid chain; its full sequence is Large ribosomal subunit protein bL31 (70 aa).

The Zn(2+) site is built by Cys17, Cys19, Cys37, and Cys40.

This sequence belongs to the bacterial ribosomal protein bL31 family. Type A subfamily. Part of the 50S ribosomal subunit. Zn(2+) serves as cofactor.

Its function is as follows. Binds the 23S rRNA. In Clostridium acetobutylicum (strain ATCC 824 / DSM 792 / JCM 1419 / IAM 19013 / LMG 5710 / NBRC 13948 / NRRL B-527 / VKM B-1787 / 2291 / W), this protein is Large ribosomal subunit protein bL31.